The primary structure comprises 260 residues: MFGSNRGGVRGGQDQFNWEDVKTDKQRENYLGNSLMAPVGRWQKGRDLTWYAKDRAPCTGPSREEELAAVREAEREALLAALGYKNVRKQPTGLSKEDFVEICKREGGDPEEKGVDRLLGLGSASGSAGRVALSREDKEAAKLGLSVFTHHRVDSEGPSTAPTAPRKKPRAEDKVEPDAESHKKSKKEKKKKKKKHKKHKKKKDKEHKREADSCSSSPSPPRPRHQRHSDFSPCSKRKREHSQDSGRNPSRRRQDRSSDD.

Residues 1–11 (MFGSNRGGVRG) show a composition bias toward gly residues. Residues 1–21 (MFGSNRGGVRGGQDQFNWEDV) form a disordered region. Glycyl lysine isopeptide (Lys-Gly) (interchain with G-Cter in SUMO2) cross-links involve residues Lys22, Lys104, and Lys113. The segment covering 106–116 (EGGDPEEKGVD) has biased composition (basic and acidic residues). Disordered stretches follow at residues 106-133 (EGGD…RVAL) and 146-260 (SVFT…SSDD). Residues 117–132 (RLLGLGSASGSAGRVA) show a composition bias toward low complexity. Residues Ser123 and Ser127 each carry the phosphoserine modification. Positions 170–182 (RAEDKVEPDAESH) are enriched in basic and acidic residues. Over residues 183 to 206 (KKSKKEKKKKKKKHKKHKKKKDKE) the composition is skewed to basic residues. A phosphoserine mark is found at Ser215, Ser216, and Ser219.

The protein is Multiple myeloma tumor-associated protein 2 homolog (Mmtag2) of Mus musculus (Mouse).